Here is a 969-residue protein sequence, read N- to C-terminus: Leucine--tRNA ligase (969 aa).

The 'HIGH' region motif lies at 45 to 55; that stretch reads PYTNAPLHIGH. The 'KMSKS' region signature appears at 649–653; it reads KMSKS. ATP is bound at residue K652.

This sequence belongs to the class-I aminoacyl-tRNA synthetase family.

Its subcellular location is the cytoplasm. The enzyme catalyses tRNA(Leu) + L-leucine + ATP = L-leucyl-tRNA(Leu) + AMP + diphosphate. This chain is Leucine--tRNA ligase, found in Staphylothermus marinus (strain ATCC 43588 / DSM 3639 / JCM 9404 / F1).